The chain runs to 423 residues: Glutamate-1-semialdehyde 2,1-aminomutase (423 aa).

Lys258 carries the post-translational modification N6-(pyridoxal phosphate)lysine.

It belongs to the class-III pyridoxal-phosphate-dependent aminotransferase family. HemL subfamily. Pyridoxal 5'-phosphate is required as a cofactor.

Its subcellular location is the cytoplasm. The catalysed reaction is (S)-4-amino-5-oxopentanoate = 5-aminolevulinate. It functions in the pathway porphyrin-containing compound metabolism; protoporphyrin-IX biosynthesis; 5-aminolevulinate from L-glutamyl-tRNA(Glu): step 2/2. The polypeptide is Glutamate-1-semialdehyde 2,1-aminomutase (Pyrobaculum aerophilum (strain ATCC 51768 / DSM 7523 / JCM 9630 / CIP 104966 / NBRC 100827 / IM2)).